The sequence spans 639 residues: 1-deoxy-D-xylulose-5-phosphate synthase (639 aa).

Thiamine diphosphate is bound by residues histidine 79 and 120-122 (GHS). Aspartate 151 provides a ligand contact to Mg(2+). Thiamine diphosphate is bound by residues 152-153 (GS), asparagine 180, tyrosine 289, and glutamate 371. Asparagine 180 is a binding site for Mg(2+).

The protein belongs to the transketolase family. DXPS subfamily. Homodimer. Mg(2+) serves as cofactor. It depends on thiamine diphosphate as a cofactor.

It catalyses the reaction D-glyceraldehyde 3-phosphate + pyruvate + H(+) = 1-deoxy-D-xylulose 5-phosphate + CO2. Its pathway is metabolic intermediate biosynthesis; 1-deoxy-D-xylulose 5-phosphate biosynthesis; 1-deoxy-D-xylulose 5-phosphate from D-glyceraldehyde 3-phosphate and pyruvate: step 1/1. In terms of biological role, catalyzes the acyloin condensation reaction between C atoms 2 and 3 of pyruvate and glyceraldehyde 3-phosphate to yield 1-deoxy-D-xylulose-5-phosphate (DXP). The sequence is that of 1-deoxy-D-xylulose-5-phosphate synthase from Agrobacterium fabrum (strain C58 / ATCC 33970) (Agrobacterium tumefaciens (strain C58)).